Here is an 833-residue protein sequence, read N- to C-terminus: F1 capsule-anchoring protein (833 aa).

Positions 1 to 25 are cleaved as a signal peptide; it reads MRYSKLFLCAGLTLATLPCWGRAYT. A disulfide bond links Cys-807 and Cys-829.

The protein belongs to the fimbrial export usher family.

It is found in the cell outer membrane. Functionally, a probable role in capsular biogenesis. It is likely that the caf1A molecule binds F1 antigen subunits during the extracellular secretion process. The protein is F1 capsule-anchoring protein (caf1A) of Yersinia pestis.